Consider the following 94-residue polypeptide: Large ribosomal subunit protein uL23 (94 aa).

It belongs to the universal ribosomal protein uL23 family. As to quaternary structure, part of the 50S ribosomal subunit. Contacts protein L29, and trigger factor when it is bound to the ribosome.

In terms of biological role, one of the early assembly proteins it binds 23S rRNA. One of the proteins that surrounds the polypeptide exit tunnel on the outside of the ribosome. Forms the main docking site for trigger factor binding to the ribosome. The chain is Large ribosomal subunit protein uL23 from Roseiflexus sp. (strain RS-1).